The following is a 397-amino-acid chain: MEVLYSISKTLKDARDKIVEGTLYSNVSDIIQQFNQIIVTMNGNEFQTGGIGTLPIRNWTFDFGLLGTTLLNLDANYVETARTTIEYFIDFIDNVCMDEMTRESQRNGIAPQSDALRKLSGIKFKRINFDNSSEYIENWNLQNRRQRTGFVFHKPNIFPYSASFTLNRSQPLHNDLMGTMWLNAGSEIQVAGFDYSCAINAPANTQQFEHIVQLRRALTTATITILPDAERFSFPRVINSADGATTWFFNPVILRPNNVEVEFLLNGQIINTYQARFGTIIARNFDTIRLSFQLMRPPNMTPAVNALFPQAQPFQHHATVGLTLRIDSAVCESVLADSNETMLANVTAVRQEYAVPVGPVFPPGMNWTELITNYSPSREDNLQRVFTVASIRSMLIK.

The interval 62-73 (DFGLLGTTLLNL) is interaction with the inner capsid protein VP2. His-153 is a Zn(2+) binding site. Asn-266 and Asp-286 together coordinate Ca(2+).

Belongs to the rotavirus VP6 family. As to quaternary structure, homotrimer. Interacts with the inner capsid protein VP2. Interacts with the outer capsid glycoprotein VP7. Interacts with the outer capsid protein VP5*. In terms of processing, the N-terminus is blocked. Sumoylated with SUMO1 and SUMO2. Sumoylation of viral proteins seems to have a positive role on viral replication.

The protein resides in the virion. Its function is as follows. Intermediate capsid protein that self assembles to form an icosahedral capsid with a T=13 symmetry, which consists of 230 trimers of VP6, with channels at each of its five-fold vertices. This capsid constitutes the middle concentric layer of the viral mature particle. The innermost VP2 capsid and the intermediate VP6 capsid remain intact following cell entry to protect the dsRNA from degradation and to prevent unfavorable antiviral responses in the host cell during all the replication cycle of the virus. Nascent transcripts are transcribed within the structural confines of this double-layered particle (DLP) and are extruded through the channels at the five-fold axes. VP6 is required for the transcription activity of the DLP. The polypeptide is Intermediate capsid protein VP6 (Rotavirus A (strain RVA/Equine/United States/FI-14/1980/G3P4[12]) (RV-A)).